Reading from the N-terminus, the 136-residue chain is Acyl-CoA thioesterase YbgC (136 aa).

Asp18 is a catalytic residue.

It belongs to the 4-hydroxybenzoyl-CoA thioesterase family.

Displays acyl-CoA thioesterase activity with short chain aliphatic acyl-CoA thioesters, such as propionyl-CoA and butyryl-CoA. Enzyme activity is relatively low, suggesting that the acyl-CoA thioesters used in the assays are not the physiological substrates. Has no detectable activity with 4-hydroxybenzoyl-CoA, lauroyl-CoA (C12:0), arachidoyl-CoA (C20:0) and arachidonoyl-CoA (C20:4). The sequence is that of Acyl-CoA thioesterase YbgC (ybgC) from Haemophilus influenzae (strain ATCC 51907 / DSM 11121 / KW20 / Rd).